We begin with the raw amino-acid sequence, 405 residues long: MPEPVAEPALNGLRLNLRIVSIVMFNFASYLTIGLPLAVLPGYVHDVMGFSAFWAGLVISLQYFATLLSRPHAGRYADLLGPKKIVVFGLCGCFLSGLGYLTAGLTASLPVISLLLLCLGRVILGIGQSFAGTGSTLWGVGVVGSLHIGRVISWNGIVTYGAMAMGAPLGVVFYHWGGLQALALIIMGVALVAILLAIPRPTVKASKGKPLPFRAVLGRVWLYGMALALASAGFGVIATFITLFYDAKGWDGAAFALTLFSCAFVGTRLLFPNGINRIGGLNVAMICFSVEIIGLLLVGVATMPWMAKIGVLLAGAGFSLVFPALGVVAVKAVPQQNQGAALATYTVFMDLSLGVTGPLAGLVMSWAGVPVIYLAAAGLVAIALLLTWRLKKRPPEHVPEAASSS.

Transmembrane regions (helical) follow at residues 19–39 (IVSIVMFNFASYLTIGLPLAV), 47–67 (VMGFSAFWAGLVISLQYFATL), 85–105 (IVVFGLCGCFLSGLGYLTAGL), 107–127 (ASLPVISLLLLCLGRVILGIG), 156–176 (GIVTYGAMAMGAPLGVVFYHW), 178–198 (GLQALALIIMGVALVAILLAI), 224–244 (GMALALASAGFGVIATFITLF), 252–272 (GAAFALTLFSCAFVGTRLLFP), 283–303 (VAMICFSVEIIGLLLVGVATM), 309–329 (IGVLLAGAGFSLVFPALGVVA), 344–364 (TYTVFMDLSLGVTGPLAGLVM), and 366–386 (WAGVPVIYLAAAGLVAIALLL).

This sequence belongs to the major facilitator superfamily. YhhS family.

The protein resides in the cell inner membrane. This is an uncharacterized protein from Shigella flexneri.